A 194-amino-acid chain; its full sequence is Dephospho-CoA kinase (194 aa).

Positions 4-194 constitute a DPCK domain; that stretch reads ALGLTGSIGM…HLVSKLTEGT (191 aa). Residue 12-17 coordinates ATP; sequence GMGKST.

Belongs to the CoaE family.

The protein resides in the cytoplasm. It carries out the reaction 3'-dephospho-CoA + ATP = ADP + CoA + H(+). It participates in cofactor biosynthesis; coenzyme A biosynthesis; CoA from (R)-pantothenate: step 5/5. Functionally, catalyzes the phosphorylation of the 3'-hydroxyl group of dephosphocoenzyme A to form coenzyme A. This Jannaschia sp. (strain CCS1) protein is Dephospho-CoA kinase.